The sequence spans 318 residues: Beta-ketoacyl-[acyl-carrier-protein] synthase III (318 aa).

Active-site residues include Cys112 and His245. The interval 246–250 (QANIR) is ACP-binding. Residue Asn275 is part of the active site.

It belongs to the thiolase-like superfamily. FabH family. Homodimer.

The protein resides in the cytoplasm. It carries out the reaction malonyl-[ACP] + acetyl-CoA + H(+) = 3-oxobutanoyl-[ACP] + CO2 + CoA. The protein operates within lipid metabolism; fatty acid biosynthesis. Its function is as follows. Catalyzes the condensation reaction of fatty acid synthesis by the addition to an acyl acceptor of two carbons from malonyl-ACP. Catalyzes the first condensation reaction which initiates fatty acid synthesis and may therefore play a role in governing the total rate of fatty acid production. Possesses both acetoacetyl-ACP synthase and acetyl transacylase activities. Its substrate specificity determines the biosynthesis of branched-chain and/or straight-chain of fatty acids. The polypeptide is Beta-ketoacyl-[acyl-carrier-protein] synthase III (Nitrosomonas europaea (strain ATCC 19718 / CIP 103999 / KCTC 2705 / NBRC 14298)).